Consider the following 259-residue polypeptide: Global transcriptional regulator CodY (259 aa).

The GAF domain stretch occupies residues 1–155 (MNLLEKTRKI…GATVVGMEIL (155 aa)). Positions 203–222 (ASKIADRVGITRSVIVNALR) form a DNA-binding region, H-T-H motif. Phosphoserine is present on serine 215.

Belongs to the CodY family.

Its subcellular location is the cytoplasm. Its function is as follows. DNA-binding global transcriptional regulator which is involved in the adaptive response to starvation and acts by directly or indirectly controlling the expression of numerous genes in response to nutrient availability. During rapid exponential growth, CodY is highly active and represses genes whose products allow adaptation to nutrient depletion. The chain is Global transcriptional regulator CodY from Anoxybacillus flavithermus (strain DSM 21510 / WK1).